Reading from the N-terminus, the 227-residue chain is ATP synthase F(0) complex subunit a (227 aa).

6 helical membrane-spanning segments follow: residues 13–33 (YLLG…LFPA), 69–89 (WALL…LGLL), 98–118 (QLSL…IIGM), 132–152 (EGTP…SLFI), 179–199 (VFVL…VLFL), and 202–222 (LLEV…LSLY).

This sequence belongs to the ATPase A chain family. As to quaternary structure, component of the ATP synthase complex composed at least of ATP5F1A/subunit alpha, ATP5F1B/subunit beta, ATP5MC1/subunit c (homooctomer), MT-ATP6/subunit a, MT-ATP8/subunit 8, ATP5ME/subunit e, ATP5MF/subunit f, ATP5MG/subunit g, ATP5MK/subunit k, ATP5MJ/subunit j, ATP5F1C/subunit gamma, ATP5F1D/subunit delta, ATP5F1E/subunit epsilon, ATP5PF/subunit F6, ATP5PB/subunit b, ATP5PD/subunit d, ATP5PO/subunit OSCP. ATP synthase complex consists of a soluble F(1) head domain (subunits alpha(3) and beta(3)) - the catalytic core - and a membrane F(0) domain - the membrane proton channel (subunits c, a, 8, e, f, g, k and j). These two domains are linked by a central stalk (subunits gamma, delta, and epsilon) rotating inside the F1 region and a stationary peripheral stalk (subunits F6, b, d, and OSCP). Interacts with DNAJC30; interaction is direct.

It localises to the mitochondrion inner membrane. The enzyme catalyses H(+)(in) = H(+)(out). Functionally, subunit a, of the mitochondrial membrane ATP synthase complex (F(1)F(0) ATP synthase or Complex V) that produces ATP from ADP in the presence of a proton gradient across the membrane which is generated by electron transport complexes of the respiratory chain. ATP synthase complex consist of a soluble F(1) head domain - the catalytic core - and a membrane F(1) domain - the membrane proton channel. These two domains are linked by a central stalk rotating inside the F(1) region and a stationary peripheral stalk. During catalysis, ATP synthesis in the catalytic domain of F(1) is coupled via a rotary mechanism of the central stalk subunits to proton translocation. With the subunit c (ATP5MC1), forms the proton-conducting channel in the F(0) domain, that contains two crucial half-channels (inlet and outlet) that facilitate proton movement from the mitochondrial intermembrane space (IMS) into the matrix. Protons are taken up via the inlet half-channel and released through the outlet half-channel, following a Grotthuss mechanism. The sequence is that of ATP synthase F(0) complex subunit a from Danio rerio (Zebrafish).